The chain runs to 482 residues: Ribosomal RNA small subunit methyltransferase F (482 aa).

S-adenosyl-L-methionine contacts are provided by residues 119 to 125, Glu-143, Asp-170, and Asp-188; that span reads ASAPGSK. Residue Cys-241 is the Nucleophile of the active site.

The protein belongs to the class I-like SAM-binding methyltransferase superfamily. RsmB/NOP family.

The protein localises to the cytoplasm. The catalysed reaction is cytidine(1407) in 16S rRNA + S-adenosyl-L-methionine = 5-methylcytidine(1407) in 16S rRNA + S-adenosyl-L-homocysteine + H(+). Functionally, specifically methylates the cytosine at position 1407 (m5C1407) of 16S rRNA. The sequence is that of Ribosomal RNA small subunit methyltransferase F from Shewanella sp. (strain MR-7).